A 632-amino-acid chain; its full sequence is 2-hydroxyacyl-CoA lyase 2 (632 aa).

Residues 13–33 form a helical membrane-spanning segment; sequence FFPSFLLLAFGTLVAAVLGVA. Residue Glu-98 coordinates thiamine diphosphate. Ser-369 bears the Phosphoserine mark. Residues 470-550 form a thiamine pyrophosphate binding region; it reads DFVATAAYLV…VIALVGNDAG (81 aa). The Mg(2+) site is built by Asp-521 and Asn-547.

It belongs to the TPP enzyme family. Requires Mg(2+) as cofactor. The cofactor is thiamine diphosphate.

The protein localises to the endoplasmic reticulum membrane. The enzyme catalyses 2-hydroxyoctadecanoyl-CoA = heptadecanal + formyl-CoA. The catalysed reaction is (2R)-hydroxyhexadecanoyl-CoA = pentadecanal + formyl-CoA. Its function is as follows. Endoplasmic reticulum 2-OH acyl-CoA lyase involved in the cleavage (C1 removal) reaction in the fatty acid alpha-oxydation in a thiamine pyrophosphate (TPP)-dependent manner. Involved in the phytosphingosine degradation pathway. The sequence is that of 2-hydroxyacyl-CoA lyase 2 (Ilvbl) from Mus musculus (Mouse).